A 201-amino-acid polypeptide reads, in one-letter code: 3-isopropylmalate dehydratase small subunit (201 aa).

Belongs to the LeuD family. LeuD type 1 subfamily. As to quaternary structure, heterodimer of LeuC and LeuD.

The catalysed reaction is (2R,3S)-3-isopropylmalate = (2S)-2-isopropylmalate. The protein operates within amino-acid biosynthesis; L-leucine biosynthesis; L-leucine from 3-methyl-2-oxobutanoate: step 2/4. Functionally, catalyzes the isomerization between 2-isopropylmalate and 3-isopropylmalate, via the formation of 2-isopropylmaleate. In Methylorubrum extorquens (strain CM4 / NCIMB 13688) (Methylobacterium extorquens), this protein is 3-isopropylmalate dehydratase small subunit.